Reading from the N-terminus, the 691-residue chain is Histone-lysine N-methyltransferase Set8 (691 aa).

Positions 1–29 are disordered; that stretch reads MIMVRRRQRPAKEAASSSSGGASSGSGIP. Positions 14–27 are enriched in low complexity; it reads AASSSSGGASSGSG. A phosphoserine mark is found at S195 and S250. Phosphothreonine is present on T252. Position 281 is a phosphoserine (S281). Disordered regions lie at residues 341–363, 382–401, 407–437, and 464–516; these read TANT…HRIL, GSAD…TTTA, KSRR…QQQQ, and AEER…ATNG. At T344 the chain carries Phosphothreonine. Residues S346, S383, S388, and S392 each carry the phosphoserine modification. 2 stretches are compositionally biased toward polar residues: residues 421–430 and 471–481; these read YQPQLQKPPS and NKAPATANSNK. The region spanning 555 to 676 is the SET domain; sequence DGLQVRHFMG…PGEELTYDYG (122 aa). Residues 565–567, Y610, and 637–638 contribute to the S-adenosyl-L-methionine site; these read KGR and NH.

Belongs to the class V-like SAM-binding methyltransferase superfamily. Histone-lysine methyltransferase family. PR/SET subfamily.

The protein resides in the nucleus. It is found in the chromosome. The enzyme catalyses L-lysyl(20)-[histone H4] + S-adenosyl-L-methionine = N(6)-methyl-L-lysyl(20)-[histone H4] + S-adenosyl-L-homocysteine + H(+). Its function is as follows. Histone methyltransferase that specifically monomethylates 'Lys-20' of histone H4. H4 'Lys-20' monomethylation is enriched during mitosis and represents a specific tag for epigenetic transcriptional repression. Mainly functions in euchromatin regions, thereby playing a central role in the silencing of euchromatic genes. Required for cell proliferation, possibly by contributing to the maintenance of proper higher-order structure of DNA and chromosome condensation during mitosis. The protein is Histone-lysine N-methyltransferase Set8 of Drosophila melanogaster (Fruit fly).